The following is a 444-amino-acid chain: U4/U6 snRNA-associated-splicing factor PRP24 (444 aa).

The segment covering 1 to 16 (MEYGHHARPDSKRPLD) has biased composition (basic and acidic residues). A disordered region spans residues 1-29 (MEYGHHARPDSKRPLDEGSPAAAGLTSKK). Position 19 is a phosphoserine (Ser19). RRM domains follow at residues 41–116 (TTVL…HLTE), 117–195 (CTLW…VSNP), and 210–289 (REIM…LADK).

As to quaternary structure, monomer. Interacts with U6 snRNA SNR6 and the LSM2-8 complex (small nuclear RNA); to chaperone formation of the U4/U6-U5 tri-snRNP (small nuclear ribonucleoprotein) assembly, the protein is displaced from the U4/U6 snRNP once pairing is complete.

The protein resides in the nucleus. Its function is as follows. Functions as a recycling factor of the spliceosome, a machinery that forms on each precursor-messenger RNA (pre-mRNA) and catalyzes the removal of introns. Chaperones the re-annealing of U4 and U6 snRNAs (small nuclear RNAs) released from previous rounds of splicing, an initial step in reforming the U4/U6-U5 tri-snRNP (small nuclear ribonucleoprotein) that can reassemble into another spliceosome complex; this step involves binding U6 and facilitating the unwinding of the U6 internal stem loop, followed by base-pairing of U6 to U4. This chain is U4/U6 snRNA-associated-splicing factor PRP24 (PRP24), found in Saccharomyces cerevisiae (strain ATCC 204508 / S288c) (Baker's yeast).